A 572-amino-acid polypeptide reads, in one-letter code: Proline--tRNA ligase (572 aa).

The protein belongs to the class-II aminoacyl-tRNA synthetase family. ProS type 1 subfamily. Homodimer.

It is found in the cytoplasm. The catalysed reaction is tRNA(Pro) + L-proline + ATP = L-prolyl-tRNA(Pro) + AMP + diphosphate. Catalyzes the attachment of proline to tRNA(Pro) in a two-step reaction: proline is first activated by ATP to form Pro-AMP and then transferred to the acceptor end of tRNA(Pro). As ProRS can inadvertently accommodate and process non-cognate amino acids such as alanine and cysteine, to avoid such errors it has two additional distinct editing activities against alanine. One activity is designated as 'pretransfer' editing and involves the tRNA(Pro)-independent hydrolysis of activated Ala-AMP. The other activity is designated 'posttransfer' editing and involves deacylation of mischarged Ala-tRNA(Pro). The misacylated Cys-tRNA(Pro) is not edited by ProRS. The polypeptide is Proline--tRNA ligase (Yersinia pestis bv. Antiqua (strain Antiqua)).